Consider the following 221-residue polypeptide: Serine protease inhibitor 7 (221 aa).

A signal peptide spans 1 to 22; the sequence is MKCLFLLCLCLVPIVVFSSTFT. A propeptide spanning residues 23-28 is cleaved from the precursor; sequence SKNPIN. A Vacuolar targeting signal motif is present at residues 25 to 30; sequence NPINLP. 2 cysteine pairs are disulfide-bonded: cysteine 76-cysteine 125 and cysteine 174-cysteine 191.

It belongs to the protease inhibitor I3 (leguminous Kunitz-type inhibitor) family. Tubers. Not detected in root, stem, leaves or flower bud.

Its subcellular location is the vacuole. Inhibitor of trypsin (serine protease). May protect the plant by inhibiting proteases of invading organisms. In Solanum tuberosum (Potato), this protein is Serine protease inhibitor 7.